The primary structure comprises 564 residues: Kelch repeat and BTB domain-containing protein 1 (564 aa).

Residues 21–88 (CDIDIVINDE…IYGIPLSLTN (68 aa)) enclose the BTB domain. In terms of domain architecture, BACK spans 123-219 (CIDFYIYADK…SLLSPQVIKS (97 aa)). 6 Kelch repeats span residues 252-297 (IELI…VLDN), 298-346 (IIYM…ADDE), 347-395 (YIYC…MLNG), 397-441 (IYVI…VHAG), 442-492 (KIYI…SVHN), and 494-539 (LYVG…CEPI).

In terms of assembly, interacts (via BTB domain) with host CUL3.

The protein localises to the host cytoplasm. Its function is as follows. Probable substrate-specific adapter of CUL3-containing E3 ubiquitin-protein ligases which mediate the ubiquitination and subsequent proteasomal degradation of host target proteins. The sequence is that of Kelch repeat and BTB domain-containing protein 1 (KBTB1) from Camelus.